Reading from the N-terminus, the 500-residue chain is Glycerol kinase (500 aa).

Position 13 (Thr-13) interacts with ADP. 3 residues coordinate ATP: Thr-13, Thr-14, and Ser-15. Thr-13 provides a ligand contact to sn-glycerol 3-phosphate. Arg-17 is an ADP binding site. Residues Arg-83, Glu-84, Tyr-135, and Asp-244 each coordinate sn-glycerol 3-phosphate. Residues Arg-83, Glu-84, Tyr-135, Asp-244, and Gln-245 each coordinate glycerol. Residues Thr-266, Gly-309, Gly-410, and Asn-414 each contribute to the ADP site. ATP contacts are provided by Thr-266, Gly-309, and Gly-410.

Belongs to the FGGY kinase family.

It catalyses the reaction glycerol + ATP = sn-glycerol 3-phosphate + ADP + H(+). Its pathway is polyol metabolism; glycerol degradation via glycerol kinase pathway; sn-glycerol 3-phosphate from glycerol: step 1/1. Its activity is regulated as follows. Inhibited by fructose 1,6-bisphosphate (FBP). In terms of biological role, key enzyme in the regulation of glycerol uptake and metabolism. Catalyzes the phosphorylation of glycerol to yield sn-glycerol 3-phosphate. This chain is Glycerol kinase, found in Chromobacterium violaceum (strain ATCC 12472 / DSM 30191 / JCM 1249 / CCUG 213 / NBRC 12614 / NCIMB 9131 / NCTC 9757 / MK).